Consider the following 261-residue polypeptide: Indole-3-glycerol phosphate synthase (261 aa).

It belongs to the TrpC family.

The catalysed reaction is 1-(2-carboxyphenylamino)-1-deoxy-D-ribulose 5-phosphate + H(+) = (1S,2R)-1-C-(indol-3-yl)glycerol 3-phosphate + CO2 + H2O. It functions in the pathway amino-acid biosynthesis; L-tryptophan biosynthesis; L-tryptophan from chorismate: step 4/5. This Burkholderia mallei (strain NCTC 10247) protein is Indole-3-glycerol phosphate synthase.